The following is a 210-amino-acid chain: Orotate phosphoribosyltransferase (210 aa).

5-phospho-alpha-D-ribose 1-diphosphate contacts are provided by residues Arg94, Lys98, His100, and 120–128 (EDLISTGGS). Residue Ser124 coordinates orotate.

The protein belongs to the purine/pyrimidine phosphoribosyltransferase family. PyrE subfamily. Homodimer. The cofactor is Mg(2+).

It carries out the reaction orotidine 5'-phosphate + diphosphate = orotate + 5-phospho-alpha-D-ribose 1-diphosphate. It functions in the pathway pyrimidine metabolism; UMP biosynthesis via de novo pathway; UMP from orotate: step 1/2. Functionally, catalyzes the transfer of a ribosyl phosphate group from 5-phosphoribose 1-diphosphate to orotate, leading to the formation of orotidine monophosphate (OMP). This chain is Orotate phosphoribosyltransferase, found in Bacillus cereus (strain G9842).